The sequence spans 149 residues: MQLILLQKVTNLGNLGDLVDVKPGYGRNFLVPQGKAVPATESNKAEFEAKRAEYEAKAQAIHADAEGRKAKLEGASVTIAANASTEGKLYGSVGPRDIAEAFTAAGLPLEKSEVILGEGAFRNIGEYDVLVHLHADVETTVKVVVVAEA.

The protein belongs to the bacterial ribosomal protein bL9 family.

Binds to the 23S rRNA. This Stenotrophomonas maltophilia (strain K279a) protein is Large ribosomal subunit protein bL9.